The chain runs to 360 residues: Carbamoyl phosphate synthase small chain (360 aa).

Positions 1–169 are CPSase; that stretch reads MTKRLLILED…TKTAYPAPGI (169 aa). L-glutamine contacts are provided by serine 46, glycine 220, and glycine 222. The Glutamine amidotransferase type-1 domain maps to 172-358; that stretch reads NIVLVDFGLK…LEMIDSWRCT (187 aa). The active-site Nucleophile is the cysteine 247. The L-glutamine site is built by methionine 248, glutamine 251, asparagine 289, glycine 291, and tyrosine 292. Catalysis depends on residues histidine 331 and aspartate 333.

The protein belongs to the CarA family. As to quaternary structure, composed of two chains; the small (or glutamine) chain promotes the hydrolysis of glutamine to ammonia, which is used by the large (or ammonia) chain to synthesize carbamoyl phosphate. Tetramer of heterodimers (alpha,beta)4.

It carries out the reaction hydrogencarbonate + L-glutamine + 2 ATP + H2O = carbamoyl phosphate + L-glutamate + 2 ADP + phosphate + 2 H(+). It catalyses the reaction L-glutamine + H2O = L-glutamate + NH4(+). Its pathway is amino-acid biosynthesis; L-arginine biosynthesis; carbamoyl phosphate from bicarbonate: step 1/1. The protein operates within pyrimidine metabolism; UMP biosynthesis via de novo pathway; (S)-dihydroorotate from bicarbonate: step 1/3. Functionally, small subunit of the glutamine-dependent carbamoyl phosphate synthetase (CPSase). CPSase catalyzes the formation of carbamoyl phosphate from the ammonia moiety of glutamine, carbonate, and phosphate donated by ATP, constituting the first step of 2 biosynthetic pathways, one leading to arginine and/or urea and the other to pyrimidine nucleotides. The small subunit (glutamine amidotransferase) binds and cleaves glutamine to supply the large subunit with the substrate ammonia. The chain is Carbamoyl phosphate synthase small chain from Streptococcus pyogenes serotype M18 (strain MGAS8232).